Reading from the N-terminus, the 1406-residue chain is DNA-directed RNA polymerase subunit beta' (1406 aa).

Residues Cys-70, Cys-72, Cys-85, and Cys-88 each contribute to the Zn(2+) site. Residues Asp-460, Asp-462, and Asp-464 each coordinate Mg(2+). The Zn(2+) site is built by Cys-814, Cys-888, Cys-895, and Cys-898.

It belongs to the RNA polymerase beta' chain family. In terms of assembly, the RNAP catalytic core consists of 2 alpha, 1 beta, 1 beta' and 1 omega subunit. When a sigma factor is associated with the core the holoenzyme is formed, which can initiate transcription. Mg(2+) is required as a cofactor. It depends on Zn(2+) as a cofactor.

The catalysed reaction is RNA(n) + a ribonucleoside 5'-triphosphate = RNA(n+1) + diphosphate. DNA-dependent RNA polymerase catalyzes the transcription of DNA into RNA using the four ribonucleoside triphosphates as substrates. In Photorhabdus laumondii subsp. laumondii (strain DSM 15139 / CIP 105565 / TT01) (Photorhabdus luminescens subsp. laumondii), this protein is DNA-directed RNA polymerase subunit beta'.